Consider the following 299-residue polypeptide: ATP phosphoribosyltransferase (299 aa).

This sequence belongs to the ATP phosphoribosyltransferase family. Long subfamily. The cofactor is Mg(2+).

Its subcellular location is the cytoplasm. It carries out the reaction 1-(5-phospho-beta-D-ribosyl)-ATP + diphosphate = 5-phospho-alpha-D-ribose 1-diphosphate + ATP. Its pathway is amino-acid biosynthesis; L-histidine biosynthesis; L-histidine from 5-phospho-alpha-D-ribose 1-diphosphate: step 1/9. Feedback inhibited by histidine. Catalyzes the condensation of ATP and 5-phosphoribose 1-diphosphate to form N'-(5'-phosphoribosyl)-ATP (PR-ATP). Has a crucial role in the pathway because the rate of histidine biosynthesis seems to be controlled primarily by regulation of HisG enzymatic activity. The sequence is that of ATP phosphoribosyltransferase from Actinobacillus pleuropneumoniae serotype 7 (strain AP76).